The chain runs to 139 residues: Glucanase inhibitor protein 3 (139 aa).

The region spanning 1–138 is the Peptidase S1 domain; that stretch reads VLTLEKPSKF…GIEWINSVIK (138 aa). Intrachain disulfides connect Cys-61-Cys-73 and Cys-83-Cys-114.

Belongs to the peptidase S1 family.

Its subcellular location is the secreted. In terms of biological role, secreted effector that suppresses host plant glucan elicitor-mediated defense responses. Targets host endoglucanases and inhibits the endoglucanase-mediated release of elicitor-active glucan oligosaccharides from P.sojae cell walls. The polypeptide is Glucanase inhibitor protein 3 (Phytophthora sojae (Soybean stem and root rot agent)).